We begin with the raw amino-acid sequence, 260 residues long: Indole-3-glycerol phosphate synthase (260 aa).

It belongs to the TrpC family.

The enzyme catalyses 1-(2-carboxyphenylamino)-1-deoxy-D-ribulose 5-phosphate + H(+) = (1S,2R)-1-C-(indol-3-yl)glycerol 3-phosphate + CO2 + H2O. It participates in amino-acid biosynthesis; L-tryptophan biosynthesis; L-tryptophan from chorismate: step 4/5. The polypeptide is Indole-3-glycerol phosphate synthase (Chloroherpeton thalassium (strain ATCC 35110 / GB-78)).